A 74-amino-acid chain; its full sequence is Conotoxin Im6.10 (74 aa).

The signal sequence occupies residues Met1–Gly19. The propeptide occupies Ser20–Arg47. 3 cysteine pairs are disulfide-bonded: Cys49-Cys58, Cys52-Cys63, and Cys57-Cys73.

In terms of tissue distribution, expressed by the venom duct.

Its subcellular location is the secreted. Its function is as follows. Probable neurotoxin. The protein is Conotoxin Im6.10 of Conus imperialis (Imperial cone).